Reading from the N-terminus, the 99-residue chain is Large ribosomal subunit protein bL25 (99 aa).

It belongs to the bacterial ribosomal protein bL25 family. In terms of assembly, part of the 50S ribosomal subunit; part of the 5S rRNA/L5/L18/L25 subcomplex. Contacts the 5S rRNA. Binds to the 5S rRNA independently of L5 and L18.

Functionally, this is one of the proteins that binds to the 5S RNA in the ribosome where it forms part of the central protuberance. This chain is Large ribosomal subunit protein bL25, found in Nostoc sp. (strain PCC 7120 / SAG 25.82 / UTEX 2576).